The following is a 261-amino-acid chain: Thioesterase frbD (261 aa).

This sequence belongs to the AMT4 thioesterase family.

The protein operates within antifungal biosynthesis. Functionally, thioesterase; part of the gene cluster that mediates the biosynthesis of the antifungal antibiotic FR901469, an inhibitor of beta-1,3-glucansynthase, exerting antifungal activity against the pathogenes Candida albicans and Aspergillus fumigatus. FR901469 is a cyclic depsipeptide containing 12 amino acid residues and a fatty acid chain. The NRPS frbI contains 12 modules responsible for the formation of the depsipeptide backbone which is denoted as Acyl-Thr-Ala-Tyr-Val-4OHPro-Thr-Thr-3OHPro-threo3OHGln-Gly-Thr-Orn-OH (C71H116N14O23). The PKS frbB is probably involved in the production of the hydrocarbon chain, and the acyl-CoA ligase frbC might be involved in the transport of the chain to the peptide ptoduct of frbI. Because FR901469 contains 3 hydroxylated amino acid residues, the 3 oxygenases frbA, frbH, and frbJ might be participating in amino acid hydroxylation. As no thioesterase domains were detected in frbI or frbB, the thioesterases frbD and frbE may instead release and cyclize the products of the NRPS and PKS, respectively. This Dothideomycetidae sp. (strain 11243) (Fungal sp. (strain No.11243)) protein is Thioesterase frbD.